Reading from the N-terminus, the 245-residue chain is MIIPALDLIDGTVVRLHQGDYARQRDYGNDPLPRLRDYAAQGAEVLHLVDLTGAKDPARRQIPLIKTLVAGVNVPVQVGGGVRTEDDVAALLDAGVARVVVGSTAVKSPEVVKGWFERFGADALVLALDVRIDDRGNKQVAVSGWQENSGVSLEELVETYLPVGLKHVLCTDISRDGTLAGSNVSLYDEVCAKYPQVAFQSSGGIGGIEDVAALRGTGVRGVIVGRALLEGKFTVKEAIQCWQNV.

The active-site Proton acceptor is the Asp7. The Proton donor role is filled by Asp129.

It belongs to the HisA/HisF family.

Its subcellular location is the cytoplasm. It carries out the reaction 1-(5-phospho-beta-D-ribosyl)-5-[(5-phospho-beta-D-ribosylamino)methylideneamino]imidazole-4-carboxamide = 5-[(5-phospho-1-deoxy-D-ribulos-1-ylimino)methylamino]-1-(5-phospho-beta-D-ribosyl)imidazole-4-carboxamide. Its pathway is amino-acid biosynthesis; L-histidine biosynthesis; L-histidine from 5-phospho-alpha-D-ribose 1-diphosphate: step 4/9. The polypeptide is 1-(5-phosphoribosyl)-5-[(5-phosphoribosylamino)methylideneamino] imidazole-4-carboxamide isomerase (Citrobacter koseri (strain ATCC BAA-895 / CDC 4225-83 / SGSC4696)).